A 481-amino-acid chain; its full sequence is Probable Xaa-Pro aminopeptidase PEPP (481 aa).

Mn(2+) contacts are provided by D265, D276, E399, and E439.

Belongs to the peptidase M24B family. Requires Mn(2+) as cofactor.

It catalyses the reaction Release of any N-terminal amino acid, including proline, that is linked to proline, even from a dipeptide or tripeptide.. Functionally, catalyzes the removal of a penultimate prolyl residue from the N-termini of peptides. The sequence is that of Probable Xaa-Pro aminopeptidase PEPP (PEPP) from Uncinocarpus reesii (strain UAMH 1704).